The primary structure comprises 202 residues: MTPQLSSSVASKLVTLKLKPVVVFGPSGVGKSTLLKRLLKDHGDKLGFSVSHTTRTPRAGEKDGIDYHFVTKEEFQKLVAEEKFVEWAVFSGNMYGTSIMAIQELEAVNKKAILDIDLQGVLQVKASPIDAQYVFLAPPSIEQLEVRLRGRGTENESAILQRLERARAEIEYSEKPGNFDALIVNDDVEKAYKQLEAICLSD.

The 183-residue stretch at 18-200 folds into the Guanylate kinase-like domain; that stretch reads LKPVVVFGPS…AYKQLEAICL (183 aa). Residue 25–32 coordinates ATP; the sequence is GPSGVGKS.

The protein belongs to the guanylate kinase family.

It carries out the reaction GMP + ATP = GDP + ADP. Essential for recycling GMP and indirectly, cGMP. This chain is Guanylate kinase, found in Schizosaccharomyces pombe (strain 972 / ATCC 24843) (Fission yeast).